We begin with the raw amino-acid sequence, 574 residues long: Sorting nexin-33 (574 aa).

Positions Met-1–Ser-61 constitute an SH3 domain. Residues Ala-68 to Asp-119 are disordered. Residues Ser-77 and Ser-92 each carry the phosphoserine modification. Positions Phe-109–Asp-119 are enriched in acidic residues. The region spanning Phe-230–Gln-340 is the PX domain. Residues Leu-371–Leu-574 form the BAR domain.

It belongs to the sorting nexin family. As to quaternary structure, homodimer (via BAR domain). Interacts with ADAM15. Interacts with FASLG. Interacts (via SH3 domain) with DNM1 and DNM2. Interacts with WASL. Interacts with FCHSD1 (via the F-BAR domain). In terms of processing, phosphorylated. In terms of tissue distribution, detected in heart and pancreas.

Its subcellular location is the cytoplasm. The protein resides in the cytosol. It is found in the membrane. The protein localises to the cytoplasmic vesicle membrane. In terms of biological role, plays a role in the reorganization of the cytoskeleton, endocytosis and cellular vesicle trafficking via its interactions with membranes, WASL, DNM1 and DNM2. Acts both during interphase and at the end of mitotic cell divisions. Required for efficient progress through mitosis and cytokinesis. Required for normal formation of the cleavage furrow at the end of mitosis. Modulates endocytosis of cell-surface proteins, such as APP and PRNP; this then modulates the secretion of APP and PRNP peptides. Promotes membrane tubulation (in vitro). May promote the formation of macropinosomes. The protein is Sorting nexin-33 (SNX33) of Homo sapiens (Human).